Reading from the N-terminus, the 178-residue chain is Large ribosomal subunit protein uL6 (178 aa).

This sequence belongs to the universal ribosomal protein uL6 family. Part of the 50S ribosomal subunit.

Functionally, this protein binds to the 23S rRNA, and is important in its secondary structure. It is located near the subunit interface in the base of the L7/L12 stalk, and near the tRNA binding site of the peptidyltransferase center. The protein is Large ribosomal subunit protein uL6 of Streptococcus pneumoniae serotype 19F (strain G54).